We begin with the raw amino-acid sequence, 146 residues long: Large-conductance mechanosensitive channel (146 aa).

2 consecutive transmembrane segments (helical) span residues 12 to 32 and 88 to 108; these read AFAM…GGAF and LQAT…IKLI.

The protein belongs to the MscL family. Homopentamer.

It localises to the cell inner membrane. Its function is as follows. Channel that opens in response to stretch forces in the membrane lipid bilayer. May participate in the regulation of osmotic pressure changes within the cell. This is Large-conductance mechanosensitive channel from Bacteroides fragilis (strain ATCC 25285 / DSM 2151 / CCUG 4856 / JCM 11019 / LMG 10263 / NCTC 9343 / Onslow / VPI 2553 / EN-2).